Consider the following 476-residue polypeptide: UDP-N-acetylmuramate--L-alanine ligase (476 aa).

Residue 121–127 coordinates ATP; it reads GAHGKTT.

Belongs to the MurCDEF family.

Its subcellular location is the cytoplasm. It catalyses the reaction UDP-N-acetyl-alpha-D-muramate + L-alanine + ATP = UDP-N-acetyl-alpha-D-muramoyl-L-alanine + ADP + phosphate + H(+). Its pathway is cell wall biogenesis; peptidoglycan biosynthesis. Its function is as follows. Cell wall formation. This is UDP-N-acetylmuramate--L-alanine ligase from Clavibacter michiganensis subsp. michiganensis (strain NCPPB 382).